The sequence spans 93 residues: Parbolysin P3 (93 aa).

3 cysteine pairs are disulfide-bonded: Cys16–Cys37, Cys22–Cys33, and Cys47–Cys60.

The protein belongs to the worm cytolysin family. Localized within the skin and proboscis and are most readily isolated from body mucus secretions.

It localises to the secreted. Cytolysin that shows hemolytic activity (on bovine erythrocytes, HC(50)=5.75 mg/ml). This hemolytic activity is completely inhibited by small unilamelar vesicles composed of PC/PG, PC/PI and PC/PS in 1:1 molar ratios (with at least 100 mg/ml concentration). The polypeptide is Parbolysin P3 (Parborlasia corrugatus (Antarctic nemertean worm)).